A 553-amino-acid polypeptide reads, in one-letter code: Dihydroxy-acid dehydratase (553 aa).

A Mg(2+)-binding site is contributed by Asp78. Cys119 is a [2Fe-2S] cluster binding site. Mg(2+)-binding residues include Asp120 and Lys121. Residue Lys121 is modified to N6-carboxylysine. Cys193 is a binding site for [2Fe-2S] cluster. Mg(2+) is bound at residue Glu441. The active-site Proton acceptor is the Ser467.

The protein belongs to the IlvD/Edd family. Homodimer. It depends on [2Fe-2S] cluster as a cofactor. Mg(2+) serves as cofactor.

It catalyses the reaction (2R)-2,3-dihydroxy-3-methylbutanoate = 3-methyl-2-oxobutanoate + H2O. It carries out the reaction (2R,3R)-2,3-dihydroxy-3-methylpentanoate = (S)-3-methyl-2-oxopentanoate + H2O. The protein operates within amino-acid biosynthesis; L-isoleucine biosynthesis; L-isoleucine from 2-oxobutanoate: step 3/4. It participates in amino-acid biosynthesis; L-valine biosynthesis; L-valine from pyruvate: step 3/4. In terms of biological role, functions in the biosynthesis of branched-chain amino acids. Catalyzes the dehydration of (2R,3R)-2,3-dihydroxy-3-methylpentanoate (2,3-dihydroxy-3-methylvalerate) into 2-oxo-3-methylpentanoate (2-oxo-3-methylvalerate) and of (2R)-2,3-dihydroxy-3-methylbutanoate (2,3-dihydroxyisovalerate) into 2-oxo-3-methylbutanoate (2-oxoisovalerate), the penultimate precursor to L-isoleucine and L-valine, respectively. The chain is Dihydroxy-acid dehydratase from Geotalea daltonii (strain DSM 22248 / JCM 15807 / FRC-32) (Geobacter daltonii).